Here is a 250-residue protein sequence, read N- to C-terminus: Probable aquaporin TIP2-2 (250 aa).

Met1 carries the post-translational modification N-acetylmethionine. Over 1–24 (MVKIEIGSVGDSFSVASLKAYLSE) the chain is Cytoplasmic. An N6,N6-dimethyllysine modification is found at Lys3. A helical membrane pass occupies residues 25–45 (FIATLLFVFAGVGSALAFAKL). The Vacuolar segment spans residues 46–53 (TSDAALDP). A helical transmembrane segment spans residues 54–74 (AGLVAVAVAHAFALFVGVSIA). The Cytoplasmic portion of the chain corresponds to 75–101 (ANISGGHLNPAVTLGLAVGGNITVITG). Residues 83 to 85 (NPA) carry the NPA 1 motif. The helical transmembrane segment at 102 to 122 (FFYWIAQCLGSIVACLLLVFV) threads the bilayer. Over 123-133 (TNGESVPTHGV) the chain is Vacuolar. The chain crosses the membrane as a helical span at residues 134–154 (AAGLGAIEGVVMEIVVTFALV). Topologically, residues 155–168 (YTVYATAADPKKGS) are cytoplasmic. A helical transmembrane segment spans residues 169-189 (LGTIAPIAIGFIVGANILAAG). The Vacuolar segment spans residues 190–210 (PFSGGSMNPARSFGPAVVSGD). Positions 197–199 (NPA) match the NPA 2 motif. Residues 211–231 (FSQIWIYWVGPLVGGALAGLI) form a helical membrane-spanning segment. The Cytoplasmic portion of the chain corresponds to 232-250 (YGDVFIGSYAPAPTTESYP). Position 248 is a phosphoserine (Ser248).

It belongs to the MIP/aquaporin (TC 1.A.8) family. TIP (TC 1.A.8.10) subfamily. Interacts with cucumber mosaic virus (CMV) Protein 1a. Expressed above groung and in roots.

The protein resides in the vacuole membrane. In terms of biological role, aquaporins facilitate the transport of water and small neutral solutes across cell membranes. This is Probable aquaporin TIP2-2 (TIP2-2) from Arabidopsis thaliana (Mouse-ear cress).